The sequence spans 374 residues: METAAFETDLSLFKYDNLEQLPPSYRDLDADERTERIESALAELGDDVVILGHNYQRQEIVEHADFIGDSYQLSKEAAQSDADYVIFGGVTFMAESADIITDDDQSVILPSMEASCPMAGMAEALQVDAAWAELTAALDDEEIIPITYMNSYADLKAFCAEQGGLVCTSSNAHKAFEYAFEKGDKVLFLPDKHLGENTAHRLGMADETVEWDPWDAEGTDAADAVENDVILWEGYCQVHERFREHHIESIREDYPDANVIVHPECRREVVEAADVAGSTSTICESVAEADPGETWAIGTEIHLTHHLQRWHPDVNVVPLCGDACMDCNAMRQIDPNYLAWVLEELVEGRERNVIEVAPEEKELAQVAMDRMLEI.

The iminosuccinate site is built by His-53 and Ser-70. Cys-116 lines the [4Fe-4S] cluster pocket. Residues 148-150 (YMN) and Ser-169 contribute to the iminosuccinate site. Cys-236 contributes to the [4Fe-4S] cluster binding site. Iminosuccinate contacts are provided by residues 262-264 (HPE) and Thr-279. [4Fe-4S] cluster is bound at residue Cys-327.

Belongs to the quinolinate synthase family. Type 3 subfamily. [4Fe-4S] cluster serves as cofactor.

Its subcellular location is the cytoplasm. The catalysed reaction is iminosuccinate + dihydroxyacetone phosphate = quinolinate + phosphate + 2 H2O + H(+). It participates in cofactor biosynthesis; NAD(+) biosynthesis; quinolinate from iminoaspartate: step 1/1. Catalyzes the condensation of iminoaspartate with dihydroxyacetone phosphate to form quinolinate. This Haloarcula marismortui (strain ATCC 43049 / DSM 3752 / JCM 8966 / VKM B-1809) (Halobacterium marismortui) protein is Quinolinate synthase.